Here is a 171-residue protein sequence, read N- to C-terminus: Adenine phosphoribosyltransferase (171 aa).

It belongs to the purine/pyrimidine phosphoribosyltransferase family. In terms of assembly, homodimer.

It localises to the cytoplasm. The enzyme catalyses AMP + diphosphate = 5-phospho-alpha-D-ribose 1-diphosphate + adenine. It functions in the pathway purine metabolism; AMP biosynthesis via salvage pathway; AMP from adenine: step 1/1. In terms of biological role, catalyzes a salvage reaction resulting in the formation of AMP, that is energically less costly than de novo synthesis. The sequence is that of Adenine phosphoribosyltransferase from Geobacter metallireducens (strain ATCC 53774 / DSM 7210 / GS-15).